The primary structure comprises 160 residues: Transcriptional repressor NrdR (160 aa).

The segment at 3–34 (CPRCHHNNSRVIDSRQADDGRAIRRRRECENC) is a zinc-finger region. One can recognise an ATP-cone domain in the interval 49-139 (LLVIKKNGDR…VYRQFKDMSV (91 aa)).

Belongs to the NrdR family. Zn(2+) is required as a cofactor.

Functionally, negatively regulates transcription of bacterial ribonucleotide reductase nrd genes and operons by binding to NrdR-boxes. This chain is Transcriptional repressor NrdR, found in Enterococcus faecalis (strain ATCC 700802 / V583).